Here is a 262-residue protein sequence, read N- to C-terminus: Adenosylcobinamide-GDP ribazoletransferase (262 aa).

6 helical membrane-spanning segments follow: residues 43–63 (YFGL…WLTQ), 66–86 (LPAG…TGGF), 120–140 (GALA…ELAL), 146–166 (AGSA…SIIF), 191–211 (LLIL…LAAL), and 242–262 (AAQQ…GNIL).

Belongs to the CobS family. Mg(2+) serves as cofactor.

It localises to the cell inner membrane. The enzyme catalyses alpha-ribazole + adenosylcob(III)inamide-GDP = adenosylcob(III)alamin + GMP + H(+). The catalysed reaction is alpha-ribazole 5'-phosphate + adenosylcob(III)inamide-GDP = adenosylcob(III)alamin 5'-phosphate + GMP + H(+). Its pathway is cofactor biosynthesis; adenosylcobalamin biosynthesis; adenosylcobalamin from cob(II)yrinate a,c-diamide: step 7/7. In terms of biological role, joins adenosylcobinamide-GDP and alpha-ribazole to generate adenosylcobalamin (Ado-cobalamin). Also synthesizes adenosylcobalamin 5'-phosphate from adenosylcobinamide-GDP and alpha-ribazole 5'-phosphate. The polypeptide is Adenosylcobinamide-GDP ribazoletransferase (Shewanella baltica (strain OS185)).